The primary structure comprises 249 residues: Cell division protein FtsQ (249 aa).

Residues 1–6 (MKFILF) are Cytoplasmic-facing. Residues 7–23 (ALLVSAGSWYGWKQLHS) form a helical membrane-spanning segment. Topologically, residues 24–249 (QDAVSKPIRY…YKNVMKERRI (226 aa)) are periplasmic. One can recognise a POTRA domain in the interval 29-98 (KPIRYVKIEG…DAVHIKITEQ (70 aa)).

This sequence belongs to the FtsQ/DivIB family. FtsQ subfamily. As to quaternary structure, part of a complex composed of FtsB, FtsL and FtsQ.

The protein resides in the cell inner membrane. Essential cell division protein. May link together the upstream cell division proteins, which are predominantly cytoplasmic, with the downstream cell division proteins, which are predominantly periplasmic. May control correct divisome assembly. This Methylomonas methanica (strain DSM 25384 / MC09) protein is Cell division protein FtsQ.